The following is a 668-amino-acid chain: Ubiquitin ligase complex F-box protein UFO1 (668 aa).

Residues 5-51 (GLVLQDLPPEILINIFSHLDEKDLFTLQELSTHFRNLIHDEELWKNL) form the F-box domain. A Phosphoserine modification is found at Ser511. The residue at position 514 (Thr514) is a Phosphothreonine. UIM domains lie at 547–566 (DEDE…YETQ), 583–602 (EDDE…DERR), and 651–668 (NVDE…SEIN). A compositionally biased stretch (polar residues) spans 564 to 578 (ETQTNSSANHGNNTN). Disordered stretches follow at residues 564 to 585 (ETQT…DEDD) and 599 to 639 (DERR…TENT).

In terms of assembly, interacts with SKP1. Component of the probable SCF(UFO1) complex containing CDC53, SKP1, RBX1 and UFO1.

Its pathway is protein modification; protein ubiquitination. Substrate recognition component of a SCF (SKP1-CUL1-F-box protein) E3 ubiquitin-protein ligase complex which mediates the ubiquitination and subsequent proteasomal degradation of target proteins. Probably recognizes and binds to phosphorylated target proteins. The chain is Ubiquitin ligase complex F-box protein UFO1 (UFO1) from Saccharomyces cerevisiae (strain ATCC 204508 / S288c) (Baker's yeast).